A 638-amino-acid chain; its full sequence is Golgin subfamily A member 8S (638 aa).

Residues 1–11 (MWPQARLPPHP) are compositionally biased toward pro residues. Residues 1–84 (MWPQARLPPH…GESPTSSATL (84 aa)) form a disordered region. Polar residues predominate over residues 50-62 (TNGSIHETATSGG). Coiled coils occupy residues 105-160 (VSQL…LNTD), 223-275 (LEQS…MSQE), and 318-417 (EAEL…QQKQ). 3 disordered regions span residues 427-453 (ALPG…PSIP), 510-532 (KDAA…DEAA), and 556-575 (AHNP…ELGA). A compositionally biased stretch (basic and acidic residues) spans 434 to 446 (GGGHLDSEGEEAP). Gly residues predominate over residues 514–525 (LGGGHHQAGAQG). Residues 561 to 574 (DEPGPGAPAPQELG) are compositionally biased toward low complexity.

Belongs to the GOLGA8 family.

This is Golgin subfamily A member 8S from Homo sapiens (Human).